A 303-amino-acid polypeptide reads, in one-letter code: N-acetylmuramic acid 6-phosphate etherase (303 aa).

The 164-residue stretch at 61-224 (IVQAFQQGGR…TTASMILLGK (164 aa)) folds into the SIS domain. Glu-89 (proton donor) is an active-site residue. Glu-120 is a catalytic residue.

This sequence belongs to the GCKR-like family. MurNAc-6-P etherase subfamily. Homodimer.

It carries out the reaction N-acetyl-D-muramate 6-phosphate + H2O = N-acetyl-D-glucosamine 6-phosphate + (R)-lactate. The protein operates within amino-sugar metabolism; 1,6-anhydro-N-acetylmuramate degradation. It functions in the pathway amino-sugar metabolism; N-acetylmuramate degradation. Its pathway is cell wall biogenesis; peptidoglycan recycling. Specifically catalyzes the cleavage of the D-lactyl ether substituent of MurNAc 6-phosphate, producing GlcNAc 6-phosphate and D-lactate. Together with AnmK, is also required for the utilization of anhydro-N-acetylmuramic acid (anhMurNAc) either imported from the medium or derived from its own cell wall murein, and thus plays a role in cell wall recycling. The polypeptide is N-acetylmuramic acid 6-phosphate etherase (murQ) (Haemophilus influenzae (strain ATCC 51907 / DSM 11121 / KW20 / Rd)).